The chain runs to 415 residues: Probable RAD2-like endonuclease 369L (415 aa).

The segment at 1–114 (MGIKNLTKFI…EDVKKKTLSL (114 aa)) is N-domain. Mg(2+)-binding residues include Asp-34, Glu-86, Glu-198, Glu-200, Asp-219, Asp-221, and Asp-277. Residues 163 to 297 (VKQRHRYDIR…VKSYELIKVQ (135 aa)) are I-domain.

This sequence belongs to the XPG/RAD2 endonuclease family. The cofactor is Mg(2+).

The protein resides in the host nucleus. Functionally, probable endonuclease. The sequence is that of Probable RAD2-like endonuclease 369L from Acheta domesticus (House cricket).